A 163-amino-acid polypeptide reads, in one-letter code: Large ribosomal subunit protein uL10 (163 aa).

The protein belongs to the universal ribosomal protein uL10 family. Part of the ribosomal stalk of the 50S ribosomal subunit. The N-terminus interacts with L11 and the large rRNA to form the base of the stalk. The C-terminus forms an elongated spine to which L12 dimers bind in a sequential fashion forming a multimeric L10(L12)X complex.

Functionally, forms part of the ribosomal stalk, playing a central role in the interaction of the ribosome with GTP-bound translation factors. The chain is Large ribosomal subunit protein uL10 from Glaesserella parasuis serovar 5 (strain SH0165) (Haemophilus parasuis).